Here is a 91-residue protein sequence, read N- to C-terminus: Molybdopterin synthase sulfur carrier subunit (91 aa).

Gly-91 carries the 1-thioglycine; alternate modification. Gly-91 is subject to Glycyl adenylate; alternate.

This sequence belongs to the MoaD family. MOCS2A subfamily. In terms of assembly, heterotetramer; composed of 2 small (MOCS2A) and 2 large (MOCS2B) subunits. In terms of processing, C-terminal thiocarboxylation occurs in 2 steps, it is first acyl-adenylated (-COAMP) via the hesA/moeB/thiF part of MOCS3, then thiocarboxylated (-COSH) via the rhodanese domain of MOCS3.

The protein resides in the cytoplasm. The protein operates within cofactor biosynthesis; molybdopterin biosynthesis. Acts as a sulfur carrier required for molybdopterin biosynthesis. Component of the molybdopterin synthase complex that catalyzes the conversion of precursor Z into molybdopterin by mediating the incorporation of 2 sulfur atoms into precursor Z to generate a dithiolene group. In the complex, serves as sulfur donor by being thiocarboxylated (-COSH) at its C-terminus by MOCS3. After interaction with MOCS2B, the sulfur is then transferred to precursor Z to form molybdopterin. The protein is Molybdopterin synthase sulfur carrier subunit of Anopheles gambiae (African malaria mosquito).